Consider the following 146-residue polypeptide: uncharacterized protein (146 aa).

The HTH marR-type domain maps to V9–H141. The H-T-H motif DNA-binding region spans I55–K78.

This is an uncharacterized protein from Bacillus subtilis (strain 168).